The chain runs to 473 residues: MRMLSRNATFNSHGQDSSYFLGWQEYEKNPYHEVHNTNGIIQMGLAENQLCFDLLESWLAKNPEAAAFKKNGESIFAELALFQDYHGLPAFKKAMVDFMAEIRGNKVTFDPNHLVLTAGATSANETFIFCLADPGEAVLIPTPYYPGFDRDLKWRTGVEIVPIHCTSSNGFQITETALEEAYQEAEKRNLRVKGVLVTNPSNPLGTTMTRNELYLLLSFVEDKGIHLISDEIYSGTAFSSPSFISVMEVLKDRNCDENSEVWQRVHVVYSLSKDLGLPGFRVGAIYSNDDMVVAAATKMSSFGLVSSQTQHLLSAMLSDKKLTKNYIAENHKRLKQRQKKLVSGLQKSGISCLNGNAGLFCWVDMRHLLRSNTFEAEMELWKKIVYEVHLNISPGSSCHCTEPGWFRVCFANLPERTLDLAMQRLKAFVGEYYNVPEVNGGSQSSHLSHSRRQSLTKWVSRLSFDDRGPIPGR.

Substrate contacts are provided by residues 84 to 85, tyrosine 145, and aspartate 151; that span reads DY. An N6-(pyridoxal phosphate)lysine modification is found at lysine 273.

It belongs to the class-I pyridoxal-phosphate-dependent aminotransferase family. Homodimer. It depends on pyridoxal 5'-phosphate as a cofactor.

The enzyme catalyses S-adenosyl-L-methionine = 1-aminocyclopropane-1-carboxylate + S-methyl-5'-thioadenosine + H(+). The catalysed reaction is (2S)-2-amino-3-butenoate + H2O = 2-oxobutanoate + NH4(+). It functions in the pathway alkene biosynthesis; ethylene biosynthesis via S-adenosyl-L-methionine; ethylene from S-adenosyl-L-methionine: step 1/2. Its activity is regulated as follows. Inhibited by L-aminoethoxyvinylglycine (AVG). Inhibited by L-vinylglycine (L-VG). Inhibited by S-methylmethionine through a L-VG ketimine intermediate. Catalyzes the formation of 1-aminocyclopropane-1-carboxylate, a direct precursor of ethylene in higher plants. Also catalyzes the conversion of L-vinylglycine (L-VG) to alpha-ketobutyrate and ammonia. Can use S-methylmethionine as substrate. In Malus domestica (Apple), this protein is 1-aminocyclopropane-1-carboxylate synthase.